We begin with the raw amino-acid sequence, 880 residues long: Interference hedgehog (880 aa).

The N-terminal stretch at M1 to A20 is a signal peptide. Residues I21–T703 are Extracellular-facing. Ig-like C2-type domains lie at P45–L142, P155–Q232, P252–V340, and P346–N432. Cystine bridges form between C68–C126, C173–C220, C276–C324, and C367–C414. N-linked (GlcNAc...) asparagine glycans are attached at residues N102 and N209. The segment at L429–V467 is disordered. Fibronectin type-III domains lie at P461–G567 and V575–P670. A glycan (N-linked (GlcNAc...) asparagine) is linked at N466. Heparin-binding residues include R497, K501, K503, and R541. A glycan (N-linked (GlcNAc...) asparagine) is linked at N557. The tract at residues L662–H692 is disordered. Residues G665–P678 are compositionally biased toward polar residues. A glycan (N-linked (GlcNAc...) asparagine) is linked at N693. A helical transmembrane segment spans residues G704–C724. Residues R725–V880 lie on the Cytoplasmic side of the membrane. Disordered regions lie at residues N728–R762 and Q775–V880. 2 stretches are compositionally biased toward low complexity: residues R823 to N837 and S864 to V880.

It belongs to the immunoglobulin superfamily. IHOG family. In terms of assembly, homodimer. Heterotetramer; 2 iHog chains bind 2 hh chains when facilitated by heparin, heparin is required to promote high-affinity interactions between hh and iHog.

The protein localises to the membrane. Its function is as follows. Mediates response to the active Hedgehog (Hh) protein signal in embryos, functioning upstream or at the level of patched (ptc). The polypeptide is Interference hedgehog (Drosophila simulans (Fruit fly)).